A 1082-amino-acid polypeptide reads, in one-letter code: Integrator complex subunit 3 homolog (1082 aa).

Disordered regions lie at residues 483-563 (PGPP…VSDD), 923-945 (YPSNSPNKRKRPSKSAQQNTAPT), and 1005-1082 (DETS…SDSD). 2 stretches are compositionally biased toward low complexity: residues 517-528 (PAAKAASTAASA) and 542-555 (TKPATTTTTTTTTT). Over residues 936–945 (KSAQQNTAPT) the composition is skewed to polar residues. 2 stretches are compositionally biased toward low complexity: residues 1008-1018 (STTVGRRGTSS) and 1033-1056 (EKAAAAAAAAHANNSKKAAEASAK).

The protein belongs to the Integrator subunit 3 family. As to quaternary structure, belongs to the multiprotein complex Integrator. The core complex associates with protein phosphatase 2A subunits, to form the Integrator-PP2A (INTAC) complex.

It localises to the nucleus. Its subcellular location is the cytoplasm. Component of the integrator complex, a multiprotein complex that terminates RNA polymerase II (Pol II) transcription in the promoter-proximal region of genes. The integrator complex provides a quality checkpoint during transcription elongation by driving premature transcription termination of transcripts that are unfavorably configured for transcriptional elongation: the complex terminates transcription by (1) catalyzing dephosphorylation of the C-terminal domain (CTD) of Pol II subunit Polr2A/Rbp1 and Spt5, and (2) degrading the exiting nascent RNA transcript via endonuclease activity. The integrator complex is also involved in the 3'-end processing of the U7 snRNA, and also the spliceosomal snRNAs U1, U2, U4 and U5. This is Integrator complex subunit 3 homolog from Anopheles gambiae (African malaria mosquito).